The chain runs to 82 residues: RNA-binding protein Hfq (82 aa).

Residues 10 to 70 (DIFLNGARKN…LSTITPSKAI (61 aa)) form the Sm domain.

This sequence belongs to the Hfq family. In terms of assembly, homohexamer.

RNA chaperone that binds small regulatory RNA (sRNAs) and mRNAs to facilitate mRNA translational regulation in response to envelope stress, environmental stress and changes in metabolite concentrations. Also binds with high specificity to tRNAs. This is RNA-binding protein Hfq from Clostridium kluyveri (strain NBRC 12016).